Consider the following 575-residue polypeptide: Urease subunit alpha (575 aa).

One can recognise a Urease domain in the interval 137–575 (GGIDCHIHFI…LPMTQRYFLF (439 aa)). The Ni(2+) site is built by His142, His144, and Lys225. Lys225 is subject to N6-carboxylysine. His227 serves as a coordination point for substrate. The Ni(2+) site is built by His254 and His280. His328 serves as the catalytic Proton donor. Asp368 is a Ni(2+) binding site.

This sequence belongs to the metallo-dependent hydrolases superfamily. Urease alpha subunit family. As to quaternary structure, heterotrimer of UreA (gamma), UreB (beta) and UreC (alpha) subunits. Three heterotrimers associate to form the active enzyme. Requires Ni cation as cofactor. In terms of processing, carboxylation allows a single lysine to coordinate two nickel ions.

It localises to the cytoplasm. It catalyses the reaction urea + 2 H2O + H(+) = hydrogencarbonate + 2 NH4(+). It participates in nitrogen metabolism; urea degradation; CO(2) and NH(3) from urea (urease route): step 1/1. This is Urease subunit alpha from Methylibium petroleiphilum (strain ATCC BAA-1232 / LMG 22953 / PM1).